Reading from the N-terminus, the 518-residue chain is WEB family protein At2g40480 (518 aa).

Coiled-coil stretches lie at residues 95-141 (DIKR…LQQE) and 188-219 (DNLV…AKLT). The interval 303–337 (NGESQDDDSEFCFPEPPRSPVTPRGLRIDNDFSTD) is disordered. A compositionally biased stretch (basic and acidic residues) spans 328-337 (LRIDNDFSTD). Residues 344-375 (ILKKLEEATEGVKQSKQALEAALNRVEIANVK) are a coiled coil.

It belongs to the WEB family.

The chain is WEB family protein At2g40480 from Arabidopsis thaliana (Mouse-ear cress).